We begin with the raw amino-acid sequence, 465 residues long: Putative apoptosis inhibitor ORF106 (465 aa).

A BIR repeat occupies 291–357; that stretch reads RECSFSTWPK…MEKETCGWLE (67 aa). Positions 373–382 are enriched in acidic residues; that stretch reads EGGEDKEEDG. A disordered region spans residues 373 to 393; sequence EGGEDKEEDGGGGGVIEFPKN. Residues 405-447 form an RING-type zinc finger; it reads CKACYERKADIAFIPCGHVFSCNICTMEMFASYKKKKRCPMCR.

This chain is Putative apoptosis inhibitor ORF106, found in Magallana gigas (Pacific oyster).